Consider the following 646-residue polypeptide: P-selectin (646 aa).

Positions 1 to 41 (MASCPKAIWNWRFQRAVFRTVQLLCFSVLIFEVINQKEVSA) are cleaved as a signal peptide. Topologically, residues 42–587 (WTYHYSNKTY…QAGPLTIQET (546 aa)) are extracellular. N-linked (GlcNAc...) asparagine glycans are attached at residues asparagine 48, asparagine 54, and asparagine 80. The 101-residue stretch at 58–158 (AFCQKYYTDL…PCWKRKRALC (101 aa)) folds into the C-type lectin domain. 17 cysteine pairs are disulfide-bonded: cysteine 60–cysteine 158, cysteine 131–cysteine 150, cysteine 163–cysteine 174, cysteine 168–cysteine 183, cysteine 185–cysteine 194, cysteine 200–cysteine 244, cysteine 230–cysteine 257, cysteine 262–cysteine 306, cysteine 292–cysteine 319, cysteine 324–cysteine 368, cysteine 354–cysteine 381, cysteine 386–cysteine 430, cysteine 416–cysteine 443, cysteine 458–cysteine 502, cysteine 488–cysteine 515, cysteine 520–cysteine 564, and cysteine 550–cysteine 577. Ca(2+) is bound by residues glutamate 121, asparagine 123, and asparagine 124. Asparagine 123 is an a carbohydrate binding site. Residues glutamate 133 and asparagine 146 each contribute to the a carbohydrate site. 2 residues coordinate Ca(2+): asparagine 146 and aspartate 147. The 37-residue stretch at 159 to 195 (YRASCQDMSCSKQGECIETIGNYTCSCYPGFYGPECE) folds into the EGF-like domain. N-linked (GlcNAc...) asparagine glycosylation occurs at asparagine 180. 6 Sushi domains span residues 198 to 259 (RECG…QCVA), 260 to 321 (VQCP…VCKA), 322 to 383 (LQCQ…ECQA), 384 to 445 (VTCA…TCEE), 456 to 517 (VQCP…TCRA), and 518 to 579 (VKCA…TCQA). N-linked (GlcNAc...) asparagine glycans are attached at residues asparagine 212 and asparagine 219. The N-linked (GlcNAc...) asparagine glycan is linked to asparagine 336. A glycan (N-linked (GlcNAc...) asparagine) is linked at asparagine 481. Asparagine 532, asparagine 539, and asparagine 557 each carry an N-linked (GlcNAc...) asparagine glycan. The helical transmembrane segment at 588-611 (LTYVGGAAAGTTGLVTGSILLALL) threads the bilayer. Residues 612–646 (RRRCRQKDDGKSPLNPQSHLGTYGVFTNAAFDPSP) are Cytoplasmic-facing. The Endocytosis signal motif lies at 634-637 (YGVF). An interaction with SNX17 region spans residues 637–646 (FTNAAFDPSP).

This sequence belongs to the selectin/LECAM family. In terms of assembly, interacts with SNX17. Interacts with SELPLG/PSGL1 and PODXL2 and mediates neutrophil adhesion and leukocyte rolling. This interaction requires the sialyl-Lewis X epitope of SELPLG and PODXL2, and specific tyrosine sulfation on SELPLG. Interacts (via C-type lectin domain) with alpha-IIb/beta3 integrin ITGA2B:ITGB3 and alpha-V/beta-3 integrin ITGAV:ITGB3. Interacts with alpha5/beta1 integrin ITGA5:ITGB1 and alpha4/beta1 integrin ITGA4:ITGB. Stored in the alpha-granules of platelets and Weibel-Palade bodies of endothelial cells. Upon cell activation by agonists, P-selectin is transported rapidly to the cell surface.

It localises to the cell membrane. Its function is as follows. Ca(2+)-dependent receptor for myeloid cells that binds to carbohydrates on neutrophils and monocytes. Mediates the interaction of activated endothelial cells or platelets with leukocytes. The ligand recognized is sialyl-Lewis X. Mediates rapid rolling of leukocyte rolling over vascular surfaces during the initial steps in inflammation through interaction with SELPLG. Mediates cell-cell interactions and cell adhesion via the interaction with integrin alpha-IIb/beta3 (ITGA2B:ITGB3) and integrin alpha-V/beta-3 (ITGAV:ITGB3). This is P-selectin (SELP) from Bos taurus (Bovine).